Reading from the N-terminus, the 380-residue chain is Ubiquitin-like protein 7 (380 aa).

In terms of domain architecture, Ubiquitin-like spans 18–98 (TPKSILRLPE…VLRKSWPEPD (81 aa)). The interval 200-313 (APMPGTDSSS…SSGVQSGTPI (114 aa)) is disordered. Residues 206–221 (DSSSRSMPSSSYRDMP) show a composition bias toward low complexity. Ser-230 bears the Phosphoserine mark. 2 stretches are compositionally biased toward low complexity: residues 240 to 253 (TRST…SSRP) and 270 to 293 (SELA…TPGT). Polar residues predominate over residues 294–313 (QGHSSGTSPMSSGVQSGTPI). A UBA domain is found at 333-377 (SLQSQWQPQLQQLRDMGIQDDELSLRALQATGGDIQAALELIFAG).

As to quaternary structure, binds ubiquitin. Interacts with MAVS; this interaction enhances TRIM21-dependent 'Lys-27'-linked polyubiquitination of MAVS. In terms of processing, deubiquitinated by OTUD4 which stabilizes UBL7 expression. As to expression, ubiquitous. Highly expressed in heart, skeletal muscle, testis, thyroid and adrenal gland.

In terms of biological role, interferon-stimulated protein that positively regulates RNA virus-triggered innate immune signaling. Mechanistically, promotes 'Lys-27'-linked polyubiquitination of MAVS through TRIM21 leading to enhanced the IFN signaling pathway. The protein is Ubiquitin-like protein 7 (UBL7) of Homo sapiens (Human).